Here is a 452-residue protein sequence, read N- to C-terminus: Bis(5'-adenosyl)-triphosphatase ENPP4 (452 aa).

The N-terminal stretch at 1–15 (MKLLVILLFSGLITG) is a signal peptide. Over 16–406 (FRSDSSSSLP…DQWCINLPEA (391 aa)) the chain is Extracellular. Residues aspartate 34 and threonine 70 each contribute to the Zn(2+) site. The AMP-threonine intermediate role is filled by threonine 70. Asparagine 91 and tyrosine 154 together coordinate substrate. Residues asparagine 155 and asparagine 166 are each glycosylated (N-linked (GlcNAc...) asparagine). Residues aspartate 189, histidine 193, aspartate 237, and histidine 238 each coordinate Zn(2+). Position 189 (aspartate 189) interacts with substrate. Cysteine 254 and cysteine 287 are joined by a disulfide. Asparagine 276 carries N-linked (GlcNAc...) asparagine glycosylation. Residue histidine 335 coordinates Zn(2+). Cysteine 393 and cysteine 400 form a disulfide bridge. A helical membrane pass occupies residues 407-427 (IAIVIGSLLVLTMLTCLIIIM). The Cytoplasmic portion of the chain corresponds to 428 to 452 (QNRLSVPRPFSRLQLQEDDDDPLIG).

It belongs to the nucleotide pyrophosphatase/phosphodiesterase family. The cofactor is Zn(2+).

It is found in the cell membrane. The enzyme catalyses P(1),P(3)-bis(5'-adenosyl) triphosphate + H2O = AMP + ADP + 2 H(+). Functionally, hydrolyzes extracellular Ap3A into AMP and ADP, and Ap4A into AMP and ATP. Ap3A and Ap4A are diadenosine polyphosphates thought to induce proliferation of vascular smooth muscle cells. Acts as a procoagulant, mediating platelet aggregation at the site of nascent thrombus via release of ADP from Ap3A and activation of ADP receptors. The polypeptide is Bis(5'-adenosyl)-triphosphatase ENPP4 (ENPP4) (Pongo abelii (Sumatran orangutan)).